A 217-amino-acid polypeptide reads, in one-letter code: Homologous-pairing protein 2 homolog (217 aa).

Residues 84 to 152 (ADLHGLDASI…RLKNIKAATN (69 aa)) are a coiled coil. Residues 118–182 (TSALTTPEMQ…WRKRKRMTTE (65 aa)) are DNA-binding.

It belongs to the HOP2 family. In terms of assembly, interacts with the DNA-binding domain of the nuclear receptors NR3C1/GR, ESR2/ER-beta, THRB and RXRA. Forms a stable heterodimer with MND1. Interacts with PSMC3/TBP1. Phosphorylated by PKA, PKC and MAPK. In terms of tissue distribution, highly expressed in testis and more specifically in spermatocytes. Detected in spleen, ovary and thymus.

The protein resides in the nucleus. In terms of biological role, plays an important role in meiotic recombination. Stimulates DMC1-mediated strand exchange required for pairing homologous chromosomes during meiosis. The complex PSMC3IP/MND1 binds DNA, stimulates the recombinase activity of DMC1 as well as DMC1 D-loop formation from double-strand DNA. This complex stabilizes presynaptic RAD51 and DMC1 filaments formed on single strand DNA to capture double-strand DNA. This complex stimulates both synaptic and presynaptic critical steps in RAD51 and DMC1-promoted homologous pairing. May inhibit HIV-1 viral protein TAT activity and modulate the activity of proteasomes through association with PSMC3. This Mus musculus (Mouse) protein is Homologous-pairing protein 2 homolog (Psmc3ip).